A 185-amino-acid chain; its full sequence is Ribosome-recycling factor (185 aa).

This sequence belongs to the RRF family.

It is found in the cytoplasm. Functionally, responsible for the release of ribosomes from messenger RNA at the termination of protein biosynthesis. May increase the efficiency of translation by recycling ribosomes from one round of translation to another. The sequence is that of Ribosome-recycling factor from Edwardsiella ictaluri (strain 93-146).